The following is a 126-amino-acid chain: Small ribosomal subunit protein bS6 (126 aa).

The protein belongs to the bacterial ribosomal protein bS6 family.

In terms of biological role, binds together with bS18 to 16S ribosomal RNA. The polypeptide is Small ribosomal subunit protein bS6 (Bordetella bronchiseptica (strain ATCC BAA-588 / NCTC 13252 / RB50) (Alcaligenes bronchisepticus)).